A 132-amino-acid chain; its full sequence is MTMTDPIADMLTRLRNANSAYHDSVVMPHSKIKSHIAEILQQEGFITGWKVEDAEVGKNLVLELKFGPNRERSIAGIKRISKPGLRVYAKSTNLPKVLGGLGVAIISTSHGLLTGQQAGKKGVGGEVLAYVW.

It belongs to the universal ribosomal protein uS8 family. As to quaternary structure, part of the 30S ribosomal subunit. Contacts proteins S5 and S12.

One of the primary rRNA binding proteins, it binds directly to 16S rRNA central domain where it helps coordinate assembly of the platform of the 30S subunit. The sequence is that of Small ribosomal subunit protein uS8 from Streptomyces griseus subsp. griseus (strain JCM 4626 / CBS 651.72 / NBRC 13350 / KCC S-0626 / ISP 5235).